The primary structure comprises 336 residues: MLDDRAKLLLKTLVERYIAEGQPVGSRTLSRAPGLDLSPATIRNVMSDLEGLGLITSPHTSAGRIPTARGYRLFVDTMLTAQREHMNAPSHLPPDQPQKVIANAANLLSNLSQFVGVVMTPRRASVFKQIEFLRLSDRRLLVIIVSPDGDVQNRVIFPEADYTQSQLVEASNYINAHYAGLTIEQVRDRLQSEVEKLRGEIAALMQAAVKVSSEVLTEAQEDDVVISGERNLLSVTDFSSDMGQLRRAFELFEQKAQLMRLLDVSSKAEGVRIFIGGESQVVPIEELSIVSANYEVDGQVVGTLGVIGPTRMPYERMIQIVDITSRLVSNALSHRK.

The protein belongs to the HrcA family.

Its function is as follows. Negative regulator of class I heat shock genes (grpE-dnaK-dnaJ and groELS operons). Prevents heat-shock induction of these operons. This chain is Heat-inducible transcription repressor HrcA, found in Variovorax paradoxus (strain S110).